We begin with the raw amino-acid sequence, 571 residues long: Sulfite reductase [NADPH] hemoprotein beta-component (571 aa).

[4Fe-4S] cluster-binding residues include cysteine 435, cysteine 441, cysteine 480, and cysteine 484. Residue cysteine 484 coordinates siroheme.

The protein belongs to the nitrite and sulfite reductase 4Fe-4S domain family. In terms of assembly, alpha(8)-beta(8). The alpha component is a flavoprotein, the beta component is a hemoprotein. The cofactor is siroheme. Requires [4Fe-4S] cluster as cofactor.

It catalyses the reaction hydrogen sulfide + 3 NADP(+) + 3 H2O = sulfite + 3 NADPH + 4 H(+). The protein operates within sulfur metabolism; hydrogen sulfide biosynthesis; hydrogen sulfide from sulfite (NADPH route): step 1/1. Functionally, component of the sulfite reductase complex that catalyzes the 6-electron reduction of sulfite to sulfide. This is one of several activities required for the biosynthesis of L-cysteine from sulfate. In Musicola paradisiaca (strain Ech703) (Dickeya paradisiaca), this protein is Sulfite reductase [NADPH] hemoprotein beta-component.